Consider the following 126-residue polypeptide: Fluoride-specific ion channel FluC 2 (126 aa).

The next 4 membrane-spanning stretches (helical) occupy residues 11–31 (IFLI…LCEL), 34–54 (GQLG…MIMY), 66–86 (GKIA…TFAV), and 93–113 (FIPA…GVFF). The Na(+) site is built by Gly-76 and Thr-79.

It belongs to the fluoride channel Fluc/FEX (TC 1.A.43) family.

Its subcellular location is the cell membrane. The enzyme catalyses fluoride(in) = fluoride(out). Its activity is regulated as follows. Na(+) is not transported, but it plays an essential structural role and its presence is essential for fluoride channel function. In terms of biological role, fluoride-specific ion channel. Important for reducing fluoride concentration in the cell, thus reducing its toxicity. In Methanosarcina acetivorans (strain ATCC 35395 / DSM 2834 / JCM 12185 / C2A), this protein is Fluoride-specific ion channel FluC 2.